The chain runs to 356 residues: MAIVSSGFEKHSSSNLSRKTRLLDPTPSLEEGKVRKEDSLRPKCWDEFIGQSALKEVLGISVKAALSRKEALDHVLLYGPPGLGKTTMALVLGNELGVKCRITSAPALERPRDIIGLLLNLEPNELLFVDEIHRLSKVAEELLYPALEDFRIDLTVGKGTTARTREINLPRFTLVGATTKPASISSPLRDRFGITQRLNFYSISDLNRIIQRAADLFGLSLTGDAGLEIARRCRGTPRIANRLLRRVRDYATVQNQLKLVDKSLVDKSLTLHQVDECGLDQSDRRFLLFIIDVHNGGPVGLDTLAAALGEEAATLESVVEPFLLQIGFLKRTSRGRVITQAALEHLNSCKNSPIIK.

The interval 13–201 is large ATPase domain (RuvB-L); the sequence is SSNLSRKTRL…FGITQRLNFY (189 aa). The tract at residues 15–35 is disordered; that stretch reads NLSRKTRLLDPTPSLEEGKVR. ATP is bound by residues Leu-40, Arg-41, Gly-82, Lys-85, Thr-86, Thr-87, 148-150, Arg-191, Tyr-201, and Arg-238; that span reads EDF. Thr-86 is a binding site for Mg(2+). Positions 202-273 are small ATPAse domain (RuvB-S); sequence SISDLNRIIQ…LVDKSLTLHQ (72 aa). Residues 276-356 form a head domain (RuvB-H) region; the sequence is ECGLDQSDRR…NSCKNSPIIK (81 aa). Residues Arg-331 and Arg-336 each contribute to the DNA site.

This sequence belongs to the RuvB family. As to quaternary structure, homohexamer. Forms an RuvA(8)-RuvB(12)-Holliday junction (HJ) complex. HJ DNA is sandwiched between 2 RuvA tetramers; dsDNA enters through RuvA and exits via RuvB. An RuvB hexamer assembles on each DNA strand where it exits the tetramer. Each RuvB hexamer is contacted by two RuvA subunits (via domain III) on 2 adjacent RuvB subunits; this complex drives branch migration. In the full resolvosome a probable DNA-RuvA(4)-RuvB(12)-RuvC(2) complex forms which resolves the HJ.

It is found in the cytoplasm. It catalyses the reaction ATP + H2O = ADP + phosphate + H(+). In terms of biological role, the RuvA-RuvB-RuvC complex processes Holliday junction (HJ) DNA during genetic recombination and DNA repair, while the RuvA-RuvB complex plays an important role in the rescue of blocked DNA replication forks via replication fork reversal (RFR). RuvA specifically binds to HJ cruciform DNA, conferring on it an open structure. The RuvB hexamer acts as an ATP-dependent pump, pulling dsDNA into and through the RuvAB complex. RuvB forms 2 homohexamers on either side of HJ DNA bound by 1 or 2 RuvA tetramers; 4 subunits per hexamer contact DNA at a time. Coordinated motions by a converter formed by DNA-disengaged RuvB subunits stimulates ATP hydrolysis and nucleotide exchange. Immobilization of the converter enables RuvB to convert the ATP-contained energy into a lever motion, pulling 2 nucleotides of DNA out of the RuvA tetramer per ATP hydrolyzed, thus driving DNA branch migration. The RuvB motors rotate together with the DNA substrate, which together with the progressing nucleotide cycle form the mechanistic basis for DNA recombination by continuous HJ branch migration. Branch migration allows RuvC to scan DNA until it finds its consensus sequence, where it cleaves and resolves cruciform DNA. This Prochlorococcus marinus (strain SARG / CCMP1375 / SS120) protein is Holliday junction branch migration complex subunit RuvB.